Consider the following 200-residue polypeptide: Holliday junction branch migration complex subunit RuvA (200 aa).

A domain I region spans residues 1–64 (MYAYFRGRLV…EDALQLYGFA (64 aa)). Positions 65-143 (TEEEKQLFRL…KLAPVGSAVA (79 aa)) are domain II. Residues 144-154 (SVAADRGGFRE) are flexible linker. The tract at residues 154 to 200 (EDAVNALMTLGFPRPVANQAVGCALEPEPDASLEVVIKRALATMHNR) is domain III.

The protein belongs to the RuvA family. In terms of assembly, homotetramer. Forms an RuvA(8)-RuvB(12)-Holliday junction (HJ) complex. HJ DNA is sandwiched between 2 RuvA tetramers; dsDNA enters through RuvA and exits via RuvB. An RuvB hexamer assembles on each DNA strand where it exits the tetramer. Each RuvB hexamer is contacted by two RuvA subunits (via domain III) on 2 adjacent RuvB subunits; this complex drives branch migration. In the full resolvosome a probable DNA-RuvA(4)-RuvB(12)-RuvC(2) complex forms which resolves the HJ.

It localises to the cytoplasm. Its function is as follows. The RuvA-RuvB-RuvC complex processes Holliday junction (HJ) DNA during genetic recombination and DNA repair, while the RuvA-RuvB complex plays an important role in the rescue of blocked DNA replication forks via replication fork reversal (RFR). RuvA specifically binds to HJ cruciform DNA, conferring on it an open structure. The RuvB hexamer acts as an ATP-dependent pump, pulling dsDNA into and through the RuvAB complex. HJ branch migration allows RuvC to scan DNA until it finds its consensus sequence, where it cleaves and resolves the cruciform DNA. The sequence is that of Holliday junction branch migration complex subunit RuvA from Chlorobium phaeovibrioides (strain DSM 265 / 1930) (Prosthecochloris vibrioformis (strain DSM 265)).